The chain runs to 385 residues: Glucans biosynthesis protein C (385 aa).

Helical transmembrane passes span 17–37 (AWLMLLGIPFHISLIYSSHTW), 60–80 (MQVFFVISGYFSYMLFLRYPL), 91–111 (VGIPMLTAIPLLTLPQFIMLQ), 137–157 (ISHLWFLLVLVVMTTLCVWIF), 173–193 (KFSMVKLSVIFLCLGIGYAVI), 212–232 (FIVMQTLFYLPFFILGALAFI), 239–259 (LFTTPSRGCTLAAALAFVAYL), 274–294 (TESVITMVLGLWMVNVVFSFG), 311–331 (ASLFIYLVHHPLTLFFGAYIT), and 338–358 (WLGFLCGLIFVVGIAIILYEI).

It belongs to the acyltransferase 3 family. OpgC subfamily.

It localises to the cell membrane. The protein operates within glycan metabolism; osmoregulated periplasmic glucan (OPG) biosynthesis. In terms of biological role, necessary for the succinyl substitution of periplasmic glucans. Could catalyze the transfer of succinyl residues from the cytoplasmic side of the membrane to the nascent glucan backbones on the periplasmic side of the membrane. The sequence is that of Glucans biosynthesis protein C from Escherichia coli O139:H28 (strain E24377A / ETEC).